A 319-amino-acid chain; its full sequence is tRNA-cytidine(32) 2-sulfurtransferase (319 aa).

A PP-loop motif motif is present at residues 43-48; that stretch reads SGGKDS. Cys-118, Cys-121, and Cys-209 together coordinate [4Fe-4S] cluster.

Belongs to the TtcA family. In terms of assembly, homodimer. The cofactor is Mg(2+). It depends on [4Fe-4S] cluster as a cofactor.

Its subcellular location is the cytoplasm. The catalysed reaction is cytidine(32) in tRNA + S-sulfanyl-L-cysteinyl-[cysteine desulfurase] + AH2 + ATP = 2-thiocytidine(32) in tRNA + L-cysteinyl-[cysteine desulfurase] + A + AMP + diphosphate + H(+). Its pathway is tRNA modification. Functionally, catalyzes the ATP-dependent 2-thiolation of cytidine in position 32 of tRNA, to form 2-thiocytidine (s(2)C32). The sulfur atoms are provided by the cysteine/cysteine desulfurase (IscS) system. In Neisseria meningitidis serogroup C (strain 053442), this protein is tRNA-cytidine(32) 2-sulfurtransferase.